A 301-amino-acid polypeptide reads, in one-letter code: tRNA dimethylallyltransferase (301 aa).

9 to 16 lines the ATP pocket; sequence GPTASGKS. Substrate is bound at residue 11–16; it reads TASGKS. Residues 34 to 37 are interaction with substrate tRNA; it reads DSMQ.

It belongs to the IPP transferase family. As to quaternary structure, monomer. The cofactor is Mg(2+).

The enzyme catalyses adenosine(37) in tRNA + dimethylallyl diphosphate = N(6)-dimethylallyladenosine(37) in tRNA + diphosphate. Functionally, catalyzes the transfer of a dimethylallyl group onto the adenine at position 37 in tRNAs that read codons beginning with uridine, leading to the formation of N6-(dimethylallyl)adenosine (i(6)A). In Corynebacterium glutamicum (strain ATCC 13032 / DSM 20300 / JCM 1318 / BCRC 11384 / CCUG 27702 / LMG 3730 / NBRC 12168 / NCIMB 10025 / NRRL B-2784 / 534), this protein is tRNA dimethylallyltransferase.